Reading from the N-terminus, the 531-residue chain is Coiled-coil domain-containing protein 9 (531 aa).

The disordered stretch occupies residues 40-531 (EDRKKAELEG…PGEAWPFESV (492 aa)). Residues 59–72 (RSVEKENVAVESEK) are compositionally biased toward basic and acidic residues. Residue Ser-80 is modified to Phosphoserine. A Phosphothreonine modification is found at Thr-95. Arg-107 is modified (omega-N-methylarginine). Ser-111 bears the Phosphoserine mark. An omega-N-methylarginine mark is found at Arg-121, Arg-128, and Arg-130. Residues Arg-131, Arg-133, and Arg-135 each carry the asymmetric dimethylarginine modification. At Ser-137 the chain carries Phosphoserine. Basic and acidic residues-rich tracts occupy residues 148–185 (ISDR…REGV), 194–217 (FLDD…EESR), and 227–241 (DFER…ERQG). Positions 149-185 (SDRKSKEWEERRRQNIEKMNEEMEKIAEYERNQREGV) form a coiled coil. Ser-202 bears the Phosphoserine mark. Ser-248 and Ser-255 each carry phosphoserine. Composition is skewed to basic and acidic residues over residues 258–279 (GRER…QERL), 289–302 (WRRE…DGMF), 311–320 (EPSHRYDDQA), and 361–372 (YSDHDDRWETKE). 3 positions are modified to phosphoserine: Ser-376, Ser-386, and Ser-390. A compositionally biased stretch (low complexity) spans 386 to 395 (SPETSPKETP). Pro residues predominate over residues 396–406 (MQPPEIPAPAH). Over residues 411–446 (DEGEENEGEEDEEWEDISEDEEEEEIEVEEGDEEEP) the composition is skewed to acidic residues. Ser-521 carries the post-translational modification Phosphoserine.

Probable component of the exon junction complex (EJC); the association is RNA-dependent.

Probable component of the exon junction complex (EJC), a multiprotein complex that associates immediately upstream of the exon-exon junction on mRNAs and serves as a positional landmark for the intron exon structure of genes and directs post-transcriptional processes in the cytoplasm such as mRNA export, nonsense-mediated mRNA decay (NMD) or translation. The sequence is that of Coiled-coil domain-containing protein 9 from Homo sapiens (Human).